Consider the following 596-residue polypeptide: Fc receptor-like protein 5 (596 aa).

An N-terminal signal peptide occupies residues M1–G26. The Extracellular segment spans residues Q27–A496. 5 Ig-like C2-type domains span residues S34–S115, P106–V199, P207–I294, P296–S384, and P398–S483. Intrachain disulfides connect C55/C99, C137/C181, and C228/C277. Residue N324 is glycosylated (N-linked (GlcNAc...) asparagine). 2 disulfides stabilise this stretch: C325–C373 and C419–C466. N436 is a glycosylation site (N-linked (GlcNAc...) asparagine). A helical membrane pass occupies residues A497–F517. Topologically, residues S518–K596 are cytoplasmic. Disordered stretches follow at residues G522–Y544 and E561–K596. Positions K577 to K596 are enriched in basic and acidic residues.

Interacts with CR2. Interacts with CD19. Post-translationally, phosphorylated on cytoplasmic tyrosines; required for interaction with protein tyrosine phosphatases and protein tyrosine kinases. In terms of tissue distribution, preferentially expressed in marginal zone B cells.

Its subcellular location is the cell membrane. In terms of biological role, plays an important role in B-cell response to antigen that acts both as a negative or positive coreceptor. Inhibits B-cell receptor (BCR) signaling in the absence of CR2 stimulation but engagement with CR2 and the BCR lead to a superior calcium response compared to CR2 and BCR costimulation. May be involved in B-cell development and differentiation in peripheral lymphoid organs and may be useful markers of B-cell stages. May have an immunoregulatory role in marginal zone B-cells. May play a role in fertilization. This chain is Fc receptor-like protein 5 (Fcrl5), found in Mus musculus (Mouse).